Consider the following 514-residue polypeptide: 2,3-bisphosphoglycerate-independent phosphoglycerate mutase (514 aa).

2 residues coordinate Mn(2+): Asp13 and Ser63. Ser63 functions as the Phosphoserine intermediate in the catalytic mechanism. Substrate contacts are provided by residues His124, 154–155, Arg186, Arg192, 258–261, and Lys332; these read RD and RADR. Positions 399, 403, 440, 441, and 459 each coordinate Mn(2+).

Belongs to the BPG-independent phosphoglycerate mutase family. In terms of assembly, monomer. Mn(2+) serves as cofactor.

It catalyses the reaction (2R)-2-phosphoglycerate = (2R)-3-phosphoglycerate. The protein operates within carbohydrate degradation; glycolysis; pyruvate from D-glyceraldehyde 3-phosphate: step 3/5. Catalyzes the interconversion of 2-phosphoglycerate and 3-phosphoglycerate. The sequence is that of 2,3-bisphosphoglycerate-independent phosphoglycerate mutase from Legionella pneumophila (strain Lens).